The following is a 260-amino-acid chain: MHRVRSARDGIVLKYHFKEDWDETQNSPIDCIASSRLKFWKRLNFNIYLDPEVSNQNLKLLKTLTLHCDFQSPKKNLTMSKFKAMAVELIHEAFLKHIVSILSKECPLSFQPSYYSKMFNAMSNANIIAGSISRILTRESLDKSFEQSHFQLLMYKKCKLIYTRTLRKNEFDGIHKFPDLEDSKQKLQVADDEENKQYSESSLLDDSQLLCSSPPVDSTEEARTCNVEEDQDEILSVALVTTDTILSSDNFVNDMLSAAD.

A disordered region spans residues 197 to 222 (QYSESSLLDDSQLLCSSPPVDSTEEA). Residues 199-213 (SESSLLDDSQLLCSS) are compositionally biased toward low complexity.

This sequence belongs to the TOP6B-like family. In terms of assembly, component of the DSB catalytic core (DSBC) complex, composed of at least rec12, rec6 and rec14. The complex interacts with mde2.

Required for formation of the rec12-mediated double-strand breaks (DSBs) that initiate meiotic recombination. May be involved primarily in the early steps of meiotic recombination. The chain is Meiotic recombination protein rec6 from Schizosaccharomyces pombe (strain 972 / ATCC 24843) (Fission yeast).